A 248-amino-acid chain; its full sequence is 3-deoxy-manno-octulosonate cytidylyltransferase (248 aa).

It belongs to the KdsB family.

It localises to the cytoplasm. The enzyme catalyses 3-deoxy-alpha-D-manno-oct-2-ulosonate + CTP = CMP-3-deoxy-beta-D-manno-octulosonate + diphosphate. The protein operates within nucleotide-sugar biosynthesis; CMP-3-deoxy-D-manno-octulosonate biosynthesis; CMP-3-deoxy-D-manno-octulosonate from 3-deoxy-D-manno-octulosonate and CTP: step 1/1. It participates in bacterial outer membrane biogenesis; lipopolysaccharide biosynthesis. Activates KDO (a required 8-carbon sugar) for incorporation into bacterial lipopolysaccharide in Gram-negative bacteria. This is 3-deoxy-manno-octulosonate cytidylyltransferase from Klebsiella pneumoniae subsp. pneumoniae (strain ATCC 700721 / MGH 78578).